Consider the following 357-residue polypeptide: Intracellular hyaluronan-binding protein 4 (357 aa).

Disordered regions lie at residues 56–116, 150–186, and 313–357; these read VVAR…HKTA, ERPRGCGRGRGGMQGRGRGGGINKSFDGFDQRGKREF, and PGCG…PALT. A compositionally biased stretch (basic and acidic residues) spans 96–115; sequence PKQEECGGKDNSRAEKEHKT. Gly residues predominate over residues 155–171; sequence CGRGRGGMQGRGRGGGI. Positions 176 to 186 are enriched in basic and acidic residues; sequence DGFDQRGKREF. Over residues 348–357 the composition is skewed to acidic residues; it reads DDPEDFPALT.

This sequence belongs to the SERBP1-HABP4 family. In terms of assembly, associates with ribosomes; promoting ribosome stabilization. Interacts with EEF2/eEF2; promoting ribosome stabilization.

The protein localises to the nucleus. The protein resides in the cytoplasm. Its subcellular location is the stress granule. It is found in the sarcoplasm. It localises to the nuclear body. The protein localises to the nucleolus. The protein resides in the nucleus speckle. Its subcellular location is the cajal body. It is found in the gem. In terms of biological role, ribosome-binding protein that promotes ribosome hibernation, a process during which ribosomes are stabilized in an inactive state and preserved from proteasomal degradation. Acts via its association with EEF2/eEF2 factor at the A-site of the ribosome, promoting ribosome stabilization in an inactive state compatible with storage. Plays a key role in ribosome hibernation in the mature egg by promoting ribosome stabilization. Ribosomes, which are produced in large quantities during oogenesis, are stored and translationally repressed in the egg and early embryo. The protein is Intracellular hyaluronan-binding protein 4 of Gallus gallus (Chicken).